Here is a 185-residue protein sequence, read N- to C-terminus: Ribosome-recycling factor (185 aa).

The protein belongs to the RRF family.

Its subcellular location is the cytoplasm. Functionally, responsible for the release of ribosomes from messenger RNA at the termination of protein biosynthesis. May increase the efficiency of translation by recycling ribosomes from one round of translation to another. In Streptococcus thermophilus (strain CNRZ 1066), this protein is Ribosome-recycling factor.